Consider the following 553-residue polypeptide: MEWLYSLFIEHSALQAVVVLSLISAIGLGLGKIHVCGISLGVTFVFFAGILAGHFGLSIDPQMLNYAESFGLIIFVYALGLQVGPGFFSSFRKGGVTLNMLAIAVVILGTFLAVVCSYTTGVSLPNMVGILCGATTNTPALGAAQQTLKQMGLESSTPALGCAVAYPLGVIGVILAVLLIRKLLVRREDLEVQEKDDANKTYIAAFQVHNPAIFNKSIKDIAHMSYPKFVISRLWRDGNVSIPTSEKIIKEGDRLLVVTSEKDALALTVLFGEQENTDWNKEDIDWNAIDSQLISQRIVVTRPELNGKKLGALRLRNHYGINISRVYRSGVQLLATPELTLQLGDRLTVVGEAAAIQNVEKVLGNAIKSLKEPNLVAVFVGIILGLALGAVPFSIPGISTPVRLGLAGGPIIVGILIGTFGPRLHMITYTTRSANLMLRALGLSLYLACLGLDAGAHFFDTVFRPEGLLWIGLGFGLTLVPTVLVGFFAFKIMKIDFGSVSGMLCGSMANPMALNYANDTIPGDNPSVAYATVYPLSMFLRVIIAQVLLMFLL.

The next 5 membrane-spanning stretches (helical) occupy residues 13 to 30 (ALQA…GLGL), 37 to 59 (GISL…GLSI), 69 to 91 (SFGL…FSSF), 98 to 120 (LNML…SYTT), and 157 to 179 (TPAL…AVLL). 2 consecutive RCK C-terminal domains span residues 190-273 (LEVQ…LFGE) and 281-365 (KEDI…VLGN). 6 helical membrane-spanning segments follow: residues 375 to 397 (LVAV…SIPG), 402 to 424 (VRLG…GPRL), 436 to 458 (LMLR…GAHF), 468 to 490 (LLWI…FFAF), 497 to 514 (FGSV…PMAL), and 529 to 551 (AYAT…LLMF).

This sequence belongs to the AAE transporter (TC 2.A.81) family.

It localises to the cell membrane. This is an uncharacterized protein from Bacteroides fragilis (strain YCH46).